The chain runs to 469 residues: MAKTLYEKLFDSHIVYEAEGETPILYINRHLIHEVTSPQAFDGLRVANRQVRQVNKTFGTMDHSISTQVRDVNKLEGQAKIQVLELDKNTKATGIKLFDITTKEQGIVHVMGPEQGLTLPGMTIVCGDSHTATHGAFGALAFGIGTSEVEHVLATQTLKQARAKSMKIEVRGKVASGITAKDIILAIIGKTTMAGGTGHVVEFCGEAIQDLSMEGRMTVCNMAIEMGAKAGLIAPDETTFAYLKDRPHAPKGKDWEDAVAYWKTLKSDDDAQFDTVVTLEAKDIAPQVTWGTNPGQVISVNETIPNPQEMADPVQRASAEKALHYIGLEAGTNLKDIKVDQVFIGSCTNSRIEDLRAAAAVMKGRKKADNVKRILVVPGSGLVKEQAEKEGLDKIFIAAGAEWRNPGCSMCLGMNDDRLGEWERCASTSNRNFEGRQGRNGRTHLVSPAMAAAAGVFGKFVDIRDVTLN.

Cys-347, Cys-408, and Cys-411 together coordinate [4Fe-4S] cluster.

This sequence belongs to the aconitase/IPM isomerase family. LeuC type 1 subfamily. As to quaternary structure, heterodimer of LeuC and LeuD. Requires [4Fe-4S] cluster as cofactor.

The enzyme catalyses (2R,3S)-3-isopropylmalate = (2S)-2-isopropylmalate. The protein operates within amino-acid biosynthesis; L-leucine biosynthesis; L-leucine from 3-methyl-2-oxobutanoate: step 2/4. In terms of biological role, catalyzes the isomerization between 2-isopropylmalate and 3-isopropylmalate, via the formation of 2-isopropylmaleate. The protein is 3-isopropylmalate dehydratase large subunit of Haemophilus influenzae (strain ATCC 51907 / DSM 11121 / KW20 / Rd).